A 342-amino-acid chain; its full sequence is dTDP-3,4-didehydro-2,6-dideoxy-alpha-D-glucose 3-reductase (342 aa).

19–25 (CADIALR) contributes to the NADP(+) binding site. A substrate-binding site is contributed by R26. NADP(+) is bound by residues 44-45 (SR), Y65, L81, and H86. The active-site Proton donor is the K104. Residues R172 and D184 each contribute to the NADP(+) site. Substrate-binding residues include Y243 and S263.

This sequence belongs to the Gfo/Idh/MocA family.

The catalysed reaction is dTDP-4-dehydro-2,6-dideoxy-alpha-D-glucose + NADP(+) = dTDP-3,4-didehydro-2,6-dideoxy-alpha-D-glucose + NADPH + H(+). The protein operates within antibiotic biosynthesis; granaticin biosynthesis. Involved in the biosynthesis of the 2,6-deoxysugar, dTDP-L-rhodinose, attached to the benzoisochromane quinone chromophore to produce the aglycone antibiotics granaticin and granaticin B. Catalyzes the reduction of the C-3 keto moiety of dTDP-3,4-diketo-2,6-dideoxy-alpha-D-glucose to yield dTDP-4-keto-2,6-dideoxy-alpha-D-glucose. NADPH is the better reductant, however NADH can also be used. This Streptomyces violaceoruber protein is dTDP-3,4-didehydro-2,6-dideoxy-alpha-D-glucose 3-reductase.